The chain runs to 838 residues: MANILRTIIENDKGELRKLEKMANKVIAYSDQMAALSDEELKAKTDEFKQRYQNGESLDDLLYEAFAVVREGAKRVLGLYPYPVQIMGGIVLHHGDVPEMRTGEGKTLTATMPVYLNALAGEGVHVVTVNEYLTERDATEMGELYSWLGLSVGINLAAKSPAEKREAYACDITYSTNSEIGFDYLRDNMVVRAENMVQRPLNYALVDEVDSILIDEARTPLIVSGPVSSETNQLYHMADSFVKSLNKDDYIIDVPSKTIGLSDSGIDKAESYFKLDNLYDIENVALTHFIDNALRANYIMILDIDYVVSEEQEILIVDQFTGRTMEGRRYSDGLHQAIEAKEGVPVQDETKTSASITYQNLFRMYKKLSGMTGTAKTEEEEFRETYNIRVIPIPTNRPIARIDHEDLLYPSLESKFKAVVEDVKERHLKGQPVLVGTVAVETSDYLSKKLVAAGIPHEVLNAKNHYREAQIIMNAGQRGAVTIATNMAGRGTDIKLGEGVRELGGLCVIGTERHESRRIDNQLRGRSGRQGDPGESQFYLSLEDELMRRFGSERIKAVLDRFKLSEEESVIKSKMFTRQVEAAQKRVEGNNYDTRKQVLQYDDVMREQREIIYAERHDVITANRDLAPEIHAMIKRTIDRFVDGNSRAPQEEKLDSILYFAKYNLVPEESISLSDLQGLSDEEIKASLYERALEVYNSQIAKLRDEEAVREFQKVLILRVVDNKWTDHIDALDQLRNAVGLRGYAQNNPVVEYQSESFRMFNDMIGSIEFDVTRLMMKAQIHEQERPRTEHNIVTTATRNISAQESDLPADVDLAKVGRNELCPCGSGKKFKNCHGRR.

ATP contacts are provided by residues Gln-85, 103 to 107 (GEGKT), and Asp-493. Positions 823, 825, 834, and 835 each coordinate Zn(2+).

This sequence belongs to the SecA family. As to quaternary structure, monomer and homodimer. Part of the essential Sec protein translocation apparatus which comprises SecA, SecYEG and auxiliary proteins SecDF. Other proteins may also be involved. Zn(2+) serves as cofactor.

The protein localises to the cell membrane. Its subcellular location is the cytoplasm. It carries out the reaction ATP + H2O + cellular proteinSide 1 = ADP + phosphate + cellular proteinSide 2.. Part of the Sec protein translocase complex. Interacts with the SecYEG preprotein conducting channel. Has a central role in coupling the hydrolysis of ATP to the transfer of proteins into and across the cell membrane, serving as an ATP-driven molecular motor driving the stepwise translocation of polypeptide chains across the membrane. The sequence is that of Protein translocase subunit SecA from Streptococcus gordonii (strain Challis / ATCC 35105 / BCRC 15272 / CH1 / DL1 / V288).